Consider the following 258-residue polypeptide: Small ribosomal subunit protein uS2 (258 aa).

It belongs to the universal ribosomal protein uS2 family.

The sequence is that of Small ribosomal subunit protein uS2 from Leuconostoc mesenteroides subsp. mesenteroides (strain ATCC 8293 / DSM 20343 / BCRC 11652 / CCM 1803 / JCM 6124 / NCDO 523 / NBRC 100496 / NCIMB 8023 / NCTC 12954 / NRRL B-1118 / 37Y).